The following is a 528-amino-acid chain: Proteinaceous RNase P 2 (528 aa).

The span at 1–16 (MAASDQHRSRRHDESS) shows a compositional bias: basic and acidic residues. The segment at 1-28 (MAASDQHRSRRHDESSSRPNKKKKVSRN) is disordered. 4 PPR repeats span residues 29-64 (PETN…EVRL), 72-107 (LLYL…GISP), 108-142 (NEAS…GGVS), and 145-179 (RLRT…GIAL). In terms of domain architecture, PRORP spans 275 to 511 (VSSTGRCLSC…NEESSRTWMC (237 aa)). Residues C281 and C284 each coordinate Zn(2+). The Mg(2+) site is built by D343, D421, D422, and D440. Zn(2+)-binding residues include H494 and C511.

Belongs to the PPR family. P subfamily. Monomer; forms dimers in crystallo but monomers in solution. The cofactor is Mg(2+).

It is found in the nucleus. The catalysed reaction is Endonucleolytic cleavage of RNA, removing 5'-extranucleotides from tRNA precursor.. Functionally, endonuclease RNase P responsible for the 5' maturation of tRNA precursors. Preferentially binds precursor tRNAs containing short 5' leaders and 3' trailers. Also involved in the maturation of mRNA and small nucleolar RNA (snoRNA). The polypeptide is Proteinaceous RNase P 2 (PRORP2) (Arabidopsis thaliana (Mouse-ear cress)).